The following is a 548-amino-acid chain: Chaperonin GroEL (548 aa).

Residues 30-33 (TLGP), K51, 87-91 (DGTTT), G415, 478-480 (NAA), and D494 each bind ATP.

This sequence belongs to the chaperonin (HSP60) family. Forms a cylinder of 14 subunits composed of two heptameric rings stacked back-to-back. Interacts with the co-chaperonin GroES.

The protein resides in the cytoplasm. The enzyme catalyses ATP + H2O + a folded polypeptide = ADP + phosphate + an unfolded polypeptide.. Together with its co-chaperonin GroES, plays an essential role in assisting protein folding. The GroEL-GroES system forms a nano-cage that allows encapsulation of the non-native substrate proteins and provides a physical environment optimized to promote and accelerate protein folding. This is Chaperonin GroEL from Janthinobacterium sp. (strain Marseille) (Minibacterium massiliensis).